Consider the following 1352-residue polypeptide: MSKVTAPGSGPPAAASGKEKRSFSKRLFRSGRAGGGGAGGPGASGPAAPSSPSSPSSARSVGSFMSRVLKTLSTLSHLSSEGAAPDRGGLRSCFPPGPAAAPTPPPCPPPPASPAPPACAAEPVPGVAGLRNHGNTCFMNATLQCLSNTELFAEYLALGQYRAGRPEPSPDPEQPAGRGAQGQGEVTEQLAHLVRALWTLEYTPQHSRDFKTIVSKNALQYRGNSQHDAQEFLLWLLDRVHEDLNHSVKQSGQPPLKPPSETDMMPEGPSFPVCSTFVQELFQAQYRSSLTCPHCQKQSNTFDPFLCISLPIPLPHTRPLYVTVVYQGKCSHCMRIGVAVPLSGTVARLREAVSMETKIPTDQIVLTEMYYDGFHRSFCDTDDLETVHESDCIFAFETPEIFRPEGILSQRGIHLNNNLNHLKFGLDYHRLSSPTQTAAKQGKMDSPTSRAGSDKIVLLVCNRACTGQQGKRFGLPFVLHLEKTIAWDLLQKEILEKMKYFLRPTVCIQVCPFSLRVVSVVGITYLLPQEEQPLCHPIVERALKSCGPGGTAHVKLVVEWDKETRDFLFVNTEDEYIPDAESVRLQRERHHQPQTCTLSQCFQLYTKEERLAPDDAWRCPHCKQLQQGSITLSLWTLPDVLIIHLKRFRQEGDRRMKLQNMVKFPLTGLDMTPHVVKRSQSSWSLPSHWSPWRRPYGLGRDPEDYIYDLYAVCNHHGTMQGGHYTAYCKNSVDGLWYCFDDSDVQQLSEDEVCTQTAYILFYQRRTAIPSWSANSSVAGSTSSSLCEHWVSRLPGSKPASVTSAASSRRTSLASLSESVEMTGERSEDDGGFSTRPFVRSVQRQSLSSRSSVTSPLAVNENCMRPSWSLSAKLQMRSNSPSRFSGDSPIHSSASTLEKIGEAADDKVSISCFGSLRNLSSSYQEPSDSHSRREHKAVGRAPLAVMEGVFKDESDTRRLNSSVVDTQSKHSAQGDRLPPLSGPFDNNNQIAYVDQSDSVDSSPVKEVKAPSHPGSLAKKPESTTKRSPSSKGTSEPEKSLRKGRPALASQESSLSSTSPSSPLPVKVSLKPSRSRSKADSSSRGSGRHSSPAPAQPKKESSPKSQDSVSSPSPQKQKSASALTYTASSTSAKKASGPATRSPFPPGKSRTSDHSLSREGSRQSLGSDRASATSTSKPNSPRVSQARAGEGRGAGKHVRSSSMASLRSPSTSIKSGLKRDSKSEDKGLSFFKSALRQKETRRSTDLGKTALLSKKAGGSSVKSVCKNTGDDEAERGHQPPASQQPNANTTGKEQLVTKDPASAKHSLLSARKSKSSQLDSGVPSSPGGRQSAEKSSKKLSSSMQTSARPSQKPQ.

The span at 1–16 shows a compositional bias: low complexity; that stretch reads MSKVTAPGSGPPAAAS. Disordered regions lie at residues 1 to 62 and 79 to 119; these read MSKV…RSVG and SSEG…PPAC. Residues 32–43 show a composition bias toward gly residues; sequence RAGGGGAGGPGA. A compositionally biased stretch (low complexity) spans 44–62; that stretch reads SGPAAPSSPSSPSSARSVG. Over residues 95–117 the composition is skewed to pro residues; that stretch reads PPGPAAAPTPPPCPPPPASPAPP. The 638-residue stretch at 128 to 765 folds into the USP domain; sequence AGLRNHGNTC…TAYILFYQRR (638 aa). Cysteine 137 (nucleophile) is an active-site residue. The tract at residues 162 to 185 is disordered; that stretch reads RAGRPEPSPDPEQPAGRGAQGQGE. The active-site Proton acceptor is the histidine 723. Disordered stretches follow at residues 812 to 835, 919 to 939, and 951 to 1352; these read LASLSESVEMTGERSEDDGGFSTR, SSSYQEPSDSHSRREHKAVGR, and DESD…QKPQ. A compositionally biased stretch (polar residues) spans 958–970; sequence LNSSVVDTQSKHS. Low complexity-rich tracts occupy residues 992 to 1001, 1051 to 1070, 1078 to 1089, and 1101 to 1138; these read VDQSDSVDSS, SSLSSTSPSSPLPVKVSLKP, DSSSRGSGRHSS, and PKSQDSVSSPSPQKQKSASALTYTASSTSAKKASGPAT. A compositionally biased stretch (basic and acidic residues) spans 1148 to 1159; sequence RTSDHSLSREGS. The segment covering 1160-1181 has biased composition (polar residues); the sequence is RQSLGSDRASATSTSKPNSPRV. A compositionally biased stretch (low complexity) spans 1198–1210; sequence SSSMASLRSPSTS. 2 stretches are compositionally biased toward basic and acidic residues: residues 1215-1225 and 1234-1243; these read LKRDSKSEDKG and RQKETRRSTD. The segment covering 1251–1264 has biased composition (low complexity); sequence SKKAGGSSVKSVCK. Lysine 1264 is modified (N6-acetyllysine). Composition is skewed to polar residues over residues 1278 to 1290 and 1341 to 1352; these read PASQQPNANTTGK and MQTSARPSQKPQ.

It belongs to the peptidase C19 family. In terms of processing, acetylated at Lys-1264. Acetylation decreases activity. Deacetylated by SIRT1. As to expression, widely expressed.

It carries out the reaction Thiol-dependent hydrolysis of ester, thioester, amide, peptide and isopeptide bonds formed by the C-terminal Gly of ubiquitin (a 76-residue protein attached to proteins as an intracellular targeting signal).. Functionally, deubiquitinase that recognizes and hydrolyzes the peptide bond at the C-terminal Gly of ubiquitin. May play a role in the regulation of NF-kappa-B signaling pathway by deubiquitinating TRAF2. (Microbial infection) Plays a positive role in foot-and-mouth disease and classical swine fever viral infection. Mechanistically, associates with internal ribosomal entry site (IRES) element within the 5'-untranslated region of viral genomes to promote translation of the virus-encoded polyprotein. This Homo sapiens (Human) protein is Ubiquitin carboxyl-terminal hydrolase 31 (USP31).